We begin with the raw amino-acid sequence, 381 residues long: Translation initiation factor eIF2B subunit beta (381 aa).

A disordered region spans residues 125–148 (LQKPEQPHQNRKNSSGSSSMKTKT). Positions 136–145 (KNSSGSSSMK) are enriched in polar residues.

Belongs to the eIF-2B alpha/beta/delta subunits family. In terms of assembly, component of the translation initiation factor 2B (eIF2B) complex which is a heterodecamer of two sets of five different subunits: alpha, beta, gamma, delta and epsilon. Subunits alpha, beta and delta comprise a regulatory subcomplex and subunits epsilon and gamma comprise a catalytic subcomplex. Within the complex, the hexameric regulatory complex resides at the center, with the two heterodimeric catalytic subcomplexes bound on opposite sides.

Its subcellular location is the cytoplasm. The protein localises to the cytosol. Functionally, acts as a component of the translation initiation factor 2B (eIF2B) complex, which catalyzes the exchange of GDP for GTP on the eukaryotic initiation factor 2 (eIF2) complex gamma subunit. Its guanine nucleotide exchange factor activity is repressed when bound to eIF2 complex phosphorylated on the alpha subunit, thereby limiting the amount of methionyl-initiator methionine tRNA available to the ribosome and consequently global translation is repressed. It activates the synthesis of GCN4 in yeast under amino acid starvation conditions by suppressing the inhibitory effects of multiple AUG codons present in the leader of GCN4 mRNA. It may promote either repression or activation of GCN4 expression depending on amino acid availability. GCD6 and GCD7 repress GCN4 expression at the translational level by ensuring that ribosomes which have translated UORF1 will reinitiate at UORF2, -3, or -4 and thus fail to reach the GCN4 start site. In Saccharomyces cerevisiae (strain ATCC 204508 / S288c) (Baker's yeast), this protein is Translation initiation factor eIF2B subunit beta (GCD7).